Reading from the N-terminus, the 158-residue chain is MQGRLSVWLIKHGLVHRSLGFDYQGIETLQIKPEDWHSIAVILYVYGYNYLRSQCAYDVAPGGLLASVYHLTRIEYGIDQPEEVCIKVFAPRRNPRIPSVFWIWKSADFQERESYDMLGISYNNHPRLKRILMPESWIGWPLRKDYIAPNFYEIQDAH.

It belongs to the complex I 30 kDa subunit family. In terms of assembly, NDH is composed of at least 16 different subunits, 5 of which are encoded in the nucleus.

The protein resides in the plastid. It localises to the chloroplast thylakoid membrane. The enzyme catalyses a plastoquinone + NADH + (n+1) H(+)(in) = a plastoquinol + NAD(+) + n H(+)(out). It catalyses the reaction a plastoquinone + NADPH + (n+1) H(+)(in) = a plastoquinol + NADP(+) + n H(+)(out). Functionally, NDH shuttles electrons from NAD(P)H:plastoquinone, via FMN and iron-sulfur (Fe-S) centers, to quinones in the photosynthetic chain and possibly in a chloroplast respiratory chain. The immediate electron acceptor for the enzyme in this species is believed to be plastoquinone. Couples the redox reaction to proton translocation, and thus conserves the redox energy in a proton gradient. The protein is NAD(P)H-quinone oxidoreductase subunit J, chloroplastic of Morus indica (Mulberry).